Reading from the N-terminus, the 356-residue chain is C-C chemokine receptor type 8 (356 aa).

Residues 1–35 (MDYTLDPSMTTMTDYYYPDSLSSPCDGELIQRNDK) are Extracellular-facing. Residues 36-63 (LLLAVFYCLLFVFSLLGNSLVILVLVVC) form a helical membrane-spanning segment. Topologically, residues 64-73 (KKLRNITDIY) are cytoplasmic. Residues 74–93 (LLNLALSDLLFVFSFPFQTY) form a helical membrane-spanning segment. Residues 94–107 (YQLDQWVFGTVMCK) lie on the Extracellular side of the membrane. Cys106 and Cys184 are disulfide-bonded. A helical transmembrane segment spans residues 108–129 (VVSGFYYIGFYSSMFFITLMSV). At 130–146 (DRYLAVVHAVYAIKVRT) the chain is on the cytoplasmic side. Residues 147–172 (IRMGTTTLSLLVWLTAIMATIPLLVF) traverse the membrane as a helical segment. The Extracellular portion of the chain corresponds to 173–203 (YQVASEDGVLQCYSFYNQQTLKWKIFTNFEM). A helical transmembrane segment spans residues 204–223 (NILGLLIPFTIFMFCYIKIL). The Cytoplasmic portion of the chain corresponds to 224–239 (HQLKRCQNHNKTKAIR). A helical transmembrane segment spans residues 240 to 264 (LVLIVVIASLLFWVPFNVVLFLTSL). The Extracellular portion of the chain corresponds to 265–281 (HSMHILDGCSISQQLNY). The helical transmembrane segment at 282–305 (ATHVTEIISFTHCCVNPVIYAFVG) threads the bilayer. Over 306–356 (EKFKKHLSEIFQKSCSHIFIYLGRQMPRESCEKSSSCQQHSFRSSSIDYIL) the chain is Cytoplasmic.

It belongs to the G-protein coupled receptor 1 family.

The protein localises to the cell membrane. In terms of biological role, receptor for the chemokines CCL1/SCYA1/I-309. May regulate monocyte chemotaxis and thymic cell line apoptosis. This chain is C-C chemokine receptor type 8 (CCR8), found in Macaca mulatta (Rhesus macaque).